The chain runs to 746 residues: Tudor domain-containing protein krimp (746 aa).

Positions 1–310 are involved in homooligomerization; sequence MNLEDISMIM…RDIYNQILKD (310 aa). The interval 311–489 is non-canonical tudor domain; it reads MAAFPENTIV…PAGITEDDMA (179 aa). The C3H1-type zinc finger occupies 511–540; sequence KDEQRICRHYDPKLNGCFKGNNCRFAHEPF. In terms of domain architecture, Tudor spans 613-670; that stretch reads KPRLLDIVLALYSDGCFYRAQIIDEFPSEYMIFYVDYGNTEFVPLSCLAPCENVDSFK.

It belongs to the Tudor domain containing protein family. Homooligomerizes (via N-terminus). Component of the ping-pong piRNA processing (4P) complex consisting of krimp, aub and AGO3; a single molecule of krimp can bind both aub and AGO3 without the need for homooligomerization. Interacts (via canonical tudor domain) with aub (via N-terminus when symmetrically dimethylated on arginine residues). Interacts (via non-canonical tudor domain) with AGO3 (via N-terminus when unmethylated on arginine residues); this interaction leads to symmetrical dimethylation on AGO3 arginine residues and its subsequent dissociation from krimp. Krimp associated AGO3 is mostly free of piRNA binding and the interaction plays an important role in the loading of AGO3 with piRNAs; piRNA binding stimulates methylation of ACO3 by the csul/PRMT5 methylosome complex and promotes dissociation of the two proteins. In terms of tissue distribution, widely expressed in female germline cells, including differentiating germ cells in germarium and egg chambers (at protein level).

It localises to the cytoplasm. It is found in the perinuclear region. The protein localises to the cytoplasmic ribonucleoprotein granule. In terms of biological role, stable structural component of the perinuclear meiotic nuage, a germline-specific subcellular membraneless ribonucleoprotein compartment involved in production of transposable element-repressing Piwi-interacting RNA (piRNA)-induced silencing complexes (piRISCs), which are essential for maintaining germline integrity during oogenesis. Scaffold component of the ping-pong piRNA processing (4P) complex that recruits the Piwi proteins aub and AGO3 to specific subregions of the nuage where it coordinates their activity in the ping-pong amplification step of secondary piRNA biogenesis. Binds methylated aub, which is associated with piRNA, and unmethylated AGO3, which is not associated with piRNA, bringing the Piwi proteins into close proximity and facilitating the loading of freshly cut piRNAs generated by aub onto AGO3. Promotes asymmetric ping-pong amplification by aub and AGO3 to bias production towards antisense piRNAs capable of silencing transposable elements. Required for symmetrical dimethylation of AGO3, probably by recruitment to the nuage where methylosome components are located; dimethylation promotes AGO3 dissociation and interaction with other tudor-domain containing proteins such as tud. Required for the recruitment of mael to the perinuclear meiotic nuage. Required for the recruitment of aub to the nuage in testes but not in ovaries. Involved in repression of long interspersed nuclear elements (LINEs) including HeT-A, I-element LINEs and possibly mst40, but not TART LINEs. The protein is Tudor domain-containing protein krimp of Drosophila melanogaster (Fruit fly).